The sequence spans 41 residues: Diuretic hormone 1 (41 aa).

Position 41 is an isoleucine amide (isoleucine 41).

Its subcellular location is the secreted. Functionally, regulation of fluid secretion. May stimulate primary urine secretion by Malpighian tubules and causes a dose-dependent stimulation of cAMP levels in the tubules. This chain is Diuretic hormone 1, found in Hyles lineata (White-lined sphinx moth).